A 29-amino-acid chain; its full sequence is Cyclotide mech-3 (29 aa).

The cyclopeptide (Gly-Asn) cross-link spans 1 to 29 (GLPTCGETCTLGKCNTPKCTCNWPICYKN). 3 disulfide bridges follow: Cys-5–Cys-19, Cys-9–Cys-21, and Cys-14–Cys-26.

Post-translationally, this is a cyclic peptide. In terms of processing, contains 3 disulfide bonds.

Functionally, probably participates in a plant defense mechanism (Potential). Binds to and induces leakage in phospholipd membranes, particularly ones containing 1-palmitoyl-2-oleophosphatidylethanolamine (POPE). In vitro, displays cytotoxicity against cultured cells but no hemolytic activity towards fresh erythrocytes. The protein is Cyclotide mech-3 of Melicytus chathamicus (Chatham Island mahoe).